The sequence spans 279 residues: Energy-coupling factor transporter ATP-binding protein EcfA2 (279 aa).

The region spanning 3–245 is the ABC transporter domain; that stretch reads ITLKNVSYTY…LDFMESIQLG (243 aa). Residue 40–47 coordinates ATP; sequence GHTGSGKS.

This sequence belongs to the ABC transporter superfamily. Energy-coupling factor EcfA family. Forms a stable energy-coupling factor (ECF) transporter complex composed of 2 membrane-embedded substrate-binding proteins (S component), 2 ATP-binding proteins (A component) and 2 transmembrane proteins (T component).

Its subcellular location is the cell membrane. Functionally, ATP-binding (A) component of a common energy-coupling factor (ECF) ABC-transporter complex. Unlike classic ABC transporters this ECF transporter provides the energy necessary to transport a number of different substrates. This Streptococcus sanguinis (strain SK36) protein is Energy-coupling factor transporter ATP-binding protein EcfA2.